We begin with the raw amino-acid sequence, 384 residues long: Secreted LysM effector Blys7 (384 aa).

Positions 1 to 18 are cleaved as a signal peptide; the sequence is MQRHLLLGLAGLPALLSA. The region spanning 27–71 is the LysM 1 domain; sequence FATVAANGETCDSMAATWGLDTATFQSLNPKAKCPEVIGGEQYCV. The span at 81–106 shows a compositional bias: low complexity; sequence EPTTAPATTSTQTTTTTTTEVTSTTV. The tract at residues 81 to 112 is disordered; it reads EPTTAPATTSTQTTTTTTTEVTSTTVPGNGIT. The region spanning 127–173 is the LysM 2 domain; that stretch reads KFYFVNKGDNCADITARYNLDLSDFLEWNPKAGNSCSGLWANAYACV. Positions 183 to 206 are disordered; the sequence is KPKPTSTSTKPPTATGNGIPTPLP. Residues 186-195 show a composition bias toward low complexity; it reads PTSTSTKPPT. Residues 217 to 263 form the LysM 3 domain; sequence KFYLVKPGETCADIASRNGVSLSDFLQWNPHAGNACSGLWANAYACL.

Belongs to the secreted LysM effector family.

Its function is as follows. Might have a role in sequestration of chitin oligosaccharides (breakdown products of fungal cell walls that are released during invasion and act as triggers of host immunity) to dampen host defense. The protein is Secreted LysM effector Blys7 of Beauveria bassiana (strain ARSEF 2860) (White muscardine disease fungus).